A 433-amino-acid polypeptide reads, in one-letter code: Hps1-dma1 cluster O-methyltransferase (433 aa).

The tract at residues 36-55 (NGHPERSLNSTDSVRLSDAP) is disordered. Aspartate 285 is a binding site for S-adenosyl-L-methionine. The active-site Proton acceptor is histidine 331.

Belongs to the class I-like SAM-binding methyltransferase superfamily. Cation-independent O-methyltransferase family. COMT subfamily.

It participates in secondary metabolite biosynthesis. In terms of biological role, O-methyltransferase; part of the hps1-dma1 gene cluster that probably mediates the biosynthesis a derivative of cyclopiazonic acid (CPA). The hybrid polyketide synthase-nonribosomal peptide synthetase (PKS-NRPS) nps1 might incorporates acetyl-CoA, malonyl-CoA, and tryptophan (Trp) and utilizes a C-terminal redox-incompetent reductase domain to make and release the tryptophan tetramic acid, cyclo-acetoacetyl-L-tryptophan (c-AATrp), as the first intermediate in the pathway. In addition, the cluster also includes the tryptophan dimethylallyltransferase dma1, the FAD-dependent oxidoreductase toxD, the cytochrome P450 monooxygenase cyp3.1 and the methyltransferase DOTSEDRAFT_139328; the latter 2 being not present in all CPA-producing fungi but involved in additional modifications that occur in biosynthesis the of a range of CPA and CPA-like products. Further studies are required to clarify whether the CPA-like hps1-dma1 cluster is functional or a non-functional relic reflecting evolution of D.septosporum. The chain is Hps1-dma1 cluster O-methyltransferase from Dothistroma septosporum (strain NZE10 / CBS 128990) (Red band needle blight fungus).